Consider the following 261-residue polypeptide: tRNA pseudouridine synthase A (261 aa).

D51 (nucleophile) is an active-site residue. Position 109 (Y109) interacts with substrate.

Belongs to the tRNA pseudouridine synthase TruA family. In terms of assembly, homodimer.

The catalysed reaction is uridine(38/39/40) in tRNA = pseudouridine(38/39/40) in tRNA. Functionally, formation of pseudouridine at positions 38, 39 and 40 in the anticodon stem and loop of transfer RNAs. This Shewanella frigidimarina (strain NCIMB 400) protein is tRNA pseudouridine synthase A.